The following is a 334-amino-acid chain: Probable prephenate dehydratase (334 aa).

A Prephenate dehydratase domain is found at 7 to 224 (RVLFLGPKGT…NTTRFLVLKR (218 aa)). The ACT domain occupies 244-322 (LTFTTRQDDP…SDKSKQWCLW (79 aa)).

It localises to the cytoplasm. It carries out the reaction prephenate + H(+) = 3-phenylpyruvate + CO2 + H2O. The protein operates within amino-acid biosynthesis; L-phenylalanine biosynthesis; phenylpyruvate from prephenate: step 1/1. Catayzes the decarboxylation/dehydration of prephenate to phenylpyruvate. In Saccharomyces cerevisiae (strain ATCC 204508 / S288c) (Baker's yeast), this protein is Probable prephenate dehydratase (PHA2).